The chain runs to 822 residues: AP-1 complex subunit gamma-1 (822 aa).

The disordered stretch occupies residues 597 to 628; it reads EIVQTNGETEPAPLETKPPPSGPQPTSQANDL. In terms of domain architecture, GAE spans 702-817; that stretch reads AGIPSITAYS…QDLAEVNNFP (116 aa).

It belongs to the adaptor complexes large subunit family. As to quaternary structure, adaptor protein complex 1 (AP-1) is a heterotetramer composed of two large adaptins (gamma-type subunit AP1G1 and beta-type subunit AP1B1), a medium adaptin (mu-type subunit AP1M1 or AP1M2) and a small adaptin (sigma-type subunit AP1S1 or AP1S2 or AP1S3). Interacts (via GAE domain) with RABEP1. Interacts with EPS15. Interacts with SYNRG/gamma-synergin. Interacts (via GAE domain) with AP1AR (via coiled-coil domain). Interacts with CLN3 (via dileucine motif); this interaction facilitates lysosomal targeting. Interacts (via GAE domain) with AFTPH/aftiphilin; the interaction is required to recruit AFTPH/aftiphilin to the perinuclear region of the cell.

Its subcellular location is the golgi apparatus. The protein localises to the cytoplasmic vesicle. The protein resides in the clathrin-coated vesicle membrane. It is found in the cytoplasm. It localises to the perinuclear region. Its subcellular location is the clathrin-coated vesicle. The protein localises to the membrane. The protein resides in the clathrin-coated pit. In terms of biological role, subunit of clathrin-associated adaptor protein complex 1 that plays a role in protein sorting in the late-Golgi/trans-Golgi network (TGN) and/or endosomes. The AP complexes mediate both the recruitment of clathrin to membranes and the recognition of sorting signals within the cytosolic tails of transmembrane cargo molecules. In association with AFTPH/aftiphilin in the aftiphilin/p200/gamma-synergin complex, involved in the trafficking of transferrin from early to recycling endosomes, and the membrane trafficking of furin and the lysosomal enzyme cathepsin D between the trans-Golgi network (TGN) and endosomes. This is AP-1 complex subunit gamma-1 (AP1G1) from Pongo abelii (Sumatran orangutan).